A 113-amino-acid polypeptide reads, in one-letter code: uncharacterized protein (113 aa).

The next 2 membrane-spanning stretches (helical) occupy residues 25-45 (FGFCYFLFLISFIMCIVCFII) and 49-69 (FEVEIILVILFPFLLLILSVW).

The protein localises to the host membrane. This is an uncharacterized protein from Spiroplasma citri (SpV1).